Reading from the N-terminus, the 551-residue chain is E3 ubiquitin-protein ligase TRIM8 (551 aa).

The RING-type zinc-finger motif lies at 15 to 56 (CPICLHVFVEPVQLPCKHNFCRGCIGEAWAKDSGLVRCPECN). B box-type zinc fingers lie at residues 92–132 (CVFC…ARGH) and 140–182 (VRAW…VCDV). Positions 181–249 (DVEIRRNEIR…HQLLDEDLRQ (69 aa)) form a coiled coil.

Belongs to the TRIM/RBCC family. As to quaternary structure, homodimer. Interacts with SOCS1 (via) SH2 domain and SOCS box. Interacts with HSP90AB1; prevents nucleus translocation of phosphorylated STAT3 and HSP90AB1. Interacts with MAP3K7/TAK1. Interacts with PIAS3. Interacts with TICAM1. Interacts with TRIM15; this interaction prevents TRIM8 cytoplasmic translocation. Widely expressed. Expressed in glomerular podocytes of kidneys.

The protein localises to the cytoplasm. Its subcellular location is the nucleus. The protein resides in the nuclear body. The enzyme catalyses S-ubiquitinyl-[E2 ubiquitin-conjugating enzyme]-L-cysteine + [acceptor protein]-L-lysine = [E2 ubiquitin-conjugating enzyme]-L-cysteine + N(6)-ubiquitinyl-[acceptor protein]-L-lysine.. The protein operates within protein modification; protein ubiquitination. E3 ubiquitin-protein ligase that participates in multiple biological processes including cell survival, differentiation, apoptosis, and in particular, the innate immune response. Participates in the activation of interferon-gamma signaling by promoting proteasomal degradation of the repressor SOCS1. Plays a positive role in the TNFalpha and IL-1beta signaling pathways. Mechanistically, induces the 'Lys-63'-linked polyubiquitination of MAP3K7/TAK1 component leading to the activation of NF-kappa-B. Also modulates STAT3 activity through negative regulation of PIAS3, either by degradation of PIAS3 through the ubiquitin-proteasome pathway or exclusion of PIAS3 from the nucleus. Negatively regulates TLR3/4-mediated innate immune response by catalyzing 'Lys-6'- and 'Lys-33'-linked polyubiquitination of TICAM1 and thereby disrupting the TICAM1-TBK1 interaction. The polypeptide is E3 ubiquitin-protein ligase TRIM8 (TRIM8) (Homo sapiens (Human)).